The sequence spans 361 residues: UDP-N-acetylglucosamine--N-acetylmuramyl-(pentapeptide) pyrophosphoryl-undecaprenol N-acetylglucosamine transferase (361 aa).

Residues 12–14 (TGG), Asn126, Arg167, Ser192, Ile247, and Gln292 contribute to the UDP-N-acetyl-alpha-D-glucosamine site.

Belongs to the glycosyltransferase 28 family. MurG subfamily.

Its subcellular location is the cell inner membrane. It carries out the reaction di-trans,octa-cis-undecaprenyl diphospho-N-acetyl-alpha-D-muramoyl-L-alanyl-D-glutamyl-meso-2,6-diaminopimeloyl-D-alanyl-D-alanine + UDP-N-acetyl-alpha-D-glucosamine = di-trans,octa-cis-undecaprenyl diphospho-[N-acetyl-alpha-D-glucosaminyl-(1-&gt;4)]-N-acetyl-alpha-D-muramoyl-L-alanyl-D-glutamyl-meso-2,6-diaminopimeloyl-D-alanyl-D-alanine + UDP + H(+). Its pathway is cell wall biogenesis; peptidoglycan biosynthesis. Functionally, cell wall formation. Catalyzes the transfer of a GlcNAc subunit on undecaprenyl-pyrophosphoryl-MurNAc-pentapeptide (lipid intermediate I) to form undecaprenyl-pyrophosphoryl-MurNAc-(pentapeptide)GlcNAc (lipid intermediate II). The polypeptide is UDP-N-acetylglucosamine--N-acetylmuramyl-(pentapeptide) pyrophosphoryl-undecaprenol N-acetylglucosamine transferase (Syntrophus aciditrophicus (strain SB)).